A 386-amino-acid polypeptide reads, in one-letter code: Porin PorA (386 aa).

An N-terminal signal peptide occupies residues 1–35; it reads MKRTLGHALIIIGAALIVIAVLLPTFLVPRLRVIP. Positions 53–63 are enriched in polar residues; sequence DSSQLGKNEPT. The disordered stretch occupies residues 53-78; the sequence is DSSQLGKNEPTPNRKNDPRCKAETDE. Residues 64 to 78 are compositionally biased toward basic and acidic residues; that stretch reads PNRKNDPRCKAETDE.

Belongs to the PorA family.

The protein resides in the secreted. It is found in the cell wall. Functionally, forms water-filled channels that favor the permeation of cations. The protein is Porin PorA of Corynebacterium amycolatum.